Here is a 267-residue protein sequence, read N- to C-terminus: Probable ribosomal RNA small subunit methyltransferase A (267 aa).

S-adenosyl-L-methionine is bound by residues leucine 12, glycine 37, glutamate 58, aspartate 83, and asparagine 100.

The protein belongs to the class I-like SAM-binding methyltransferase superfamily. rRNA adenine N(6)-methyltransferase family. RsmA subfamily.

It is found in the cytoplasm. Functionally, specifically dimethylates two adjacent adenosines in the loop of a conserved hairpin near the 3'-end of 16S rRNA in the 30S particle. May play a critical role in biogenesis of 30S subunits. In Methanococcus maripaludis (strain DSM 14266 / JCM 13030 / NBRC 101832 / S2 / LL), this protein is Probable ribosomal RNA small subunit methyltransferase A.